The following is a 596-amino-acid chain: MSTSPAARPTSNAHLLGWVDEMAKLCKPDRVYWCDGSEAEKKRLTDDAVAAKVLIPLDQQKWPGCHYHHSNSSDVARVEHLTFICTPTKEQAGPTNNWMEPKEAYRKLGAIFDGSMKGRTMYVVPYVMGPSTSPFAKVGIEITDSVYVALNMGIMARMGKVALDRLGDSDEFNRGLHSVADCNPERRFICHFPQDNTIWSVGSGYGGNALLGKKCLALRIASYLAKNEGWLAEHMLILEAESPTGEKQYVAAAFPSACGKTNFAMMIPPAAFPGWKIRTVGDDISWMRVGEDGRLWAVNPENGYFGVAPGTNRKTNPNAMDSVRKDTIFTNVARTPDGDIWWEGMDHEAPAELIDWKGQPWKKGSTEKAAHPNSRFTAPAKNNPAISPLVDDPKGVPISAIIFGGRRSTTVPLVLEAFNWTHGVYLGSTMGSETTAAATGQVGVVRRDPMAMLPFIGYDCGSYLQHWLDMQSRIPNPPKIFLVNWFRKSAEGKFLWPGYGDNMRVLKWMLDRAAGRAPAKETLLGYTPGDSGLDLHGLDVSKDAIAAATQIDLGEWEQELESQSEWFEKLGKTLPRPLALQRELLLERVRAARKVK.

Residues R77 and 205 to 207 contribute to the substrate site; that span reads YGG. Mn(2+) is bound by residues K214 and H234. S256 contacts substrate. 257-262 serves as a coordination point for GTP; sequence ACGKTN. C258 is an active-site residue. Residue D283 participates in Mn(2+) binding. The disordered stretch occupies residues 362-388; that stretch reads KKGSTEKAAHPNSRFTAPAKNNPAISP. 373–375 contacts substrate; the sequence is NSR. Residues R375, R406, and 499–502 contribute to the GTP site; that span reads YGDN.

Belongs to the phosphoenolpyruvate carboxykinase [GTP] family. As to quaternary structure, monomer. Mn(2+) is required as a cofactor.

It localises to the cytoplasm. The catalysed reaction is oxaloacetate + GTP = phosphoenolpyruvate + GDP + CO2. It functions in the pathway carbohydrate biosynthesis; gluconeogenesis. Catalyzes the conversion of oxaloacetate (OAA) to phosphoenolpyruvate (PEP), the rate-limiting step in the metabolic pathway that produces glucose from lactate and other precursors derived from the citric acid cycle. The sequence is that of Phosphoenolpyruvate carboxykinase [GTP] from Anaeromyxobacter dehalogenans (strain 2CP-1 / ATCC BAA-258).